The following is a 1068-amino-acid chain: DNA-directed RNA polymerase subunit beta (1068 aa).

The protein belongs to the RNA polymerase beta chain family. As to quaternary structure, in plastids the minimal PEP RNA polymerase catalytic core is composed of four subunits: alpha, beta, beta', and beta''. When a (nuclear-encoded) sigma factor is associated with the core the holoenzyme is formed, which can initiate transcription.

It is found in the plastid. The protein localises to the chloroplast. The catalysed reaction is RNA(n) + a ribonucleoside 5'-triphosphate = RNA(n+1) + diphosphate. In terms of biological role, DNA-dependent RNA polymerase catalyzes the transcription of DNA into RNA using the four ribonucleoside triphosphates as substrates. The polypeptide is DNA-directed RNA polymerase subunit beta (Staurastrum punctulatum (Green alga)).